The chain runs to 131 residues: MTTKRKPYVRPMTSTWWKKLPFYRFYMLREGTAVPAVWFSIELIFGLFALKHGAESWMGFVGFLQNPVVVILNLITLAAALLHTKTWFELAPKAANIIVKDEKMGPEPIIKGLWVVTAVVTVVILYVALFW.

Helical transmembrane passes span 30-50 (EGTA…LFAL), 57-77 (WMGF…LITL), and 109-129 (IIKG…YVAL).

It belongs to the FrdC family. As to quaternary structure, part of an enzyme complex containing four subunits: a flavoprotein (FrdA), an iron-sulfur protein (FrdB), and two hydrophobic anchor proteins (FrdC and FrdD).

Its subcellular location is the cell inner membrane. Its function is as follows. Two distinct, membrane-bound, FAD-containing enzymes are responsible for the catalysis of fumarate and succinate interconversion; fumarate reductase is used in anaerobic growth, and succinate dehydrogenase is used in aerobic growth. Anchors the catalytic components of the fumarate reductase complex to the cell inner membrane, binds quinones. The sequence is that of Fumarate reductase subunit C from Salmonella choleraesuis (strain SC-B67).